The chain runs to 158 residues: Protein SREK1IP1 (158 aa).

Disordered regions lie at residues 1 to 20 and 45 to 158; these read MAAPGPNKDNIRAGCKRCGY and SSTS…SDTD. The CCHC-type zinc finger occupies 13–30; that stretch reads AGCKRCGYPGHLTFECRN. Basic and acidic residues predominate over residues 59-79; that stretch reads ALSKEKIFGSHSKGSQEDSRK. 2 stretches are compositionally biased toward basic residues: residues 80–98 and 111–140; these read EKHKKKSKERSRGKAKKRS and KKKKKRKSNKKKGKKEKREKERKHKKKQKK. Positions 145–158 are enriched in low complexity; sequence SSSSDSSSESSDTD.

Functionally, possible splicing regulator involved in the control of cellular survival. The chain is Protein SREK1IP1 (srek1ip1) from Danio rerio (Zebrafish).